Here is an 86-residue protein sequence, read N- to C-terminus: Small ribosomal subunit protein uS17 (86 aa).

The protein belongs to the universal ribosomal protein uS17 family. In terms of assembly, part of the 30S ribosomal subunit.

Its function is as follows. One of the primary rRNA binding proteins, it binds specifically to the 5'-end of 16S ribosomal RNA. The sequence is that of Small ribosomal subunit protein uS17 from Rhizorhabdus wittichii (strain DSM 6014 / CCUG 31198 / JCM 15750 / NBRC 105917 / EY 4224 / RW1) (Sphingomonas wittichii).